Consider the following 337-residue polypeptide: Tetraacyldisaccharide 4'-kinase (337 aa).

52 to 59 (TLGGAGKT) is an ATP binding site.

This sequence belongs to the LpxK family.

The enzyme catalyses a lipid A disaccharide + ATP = a lipid IVA + ADP + H(+). Its pathway is glycolipid biosynthesis; lipid IV(A) biosynthesis; lipid IV(A) from (3R)-3-hydroxytetradecanoyl-[acyl-carrier-protein] and UDP-N-acetyl-alpha-D-glucosamine: step 6/6. Transfers the gamma-phosphate of ATP to the 4'-position of a tetraacyldisaccharide 1-phosphate intermediate (termed DS-1-P) to form tetraacyldisaccharide 1,4'-bis-phosphate (lipid IVA). The polypeptide is Tetraacyldisaccharide 4'-kinase (Methylobacterium nodulans (strain LMG 21967 / CNCM I-2342 / ORS 2060)).